Reading from the N-terminus, the 298-residue chain is tRNA-uridine aminocarboxypropyltransferase 2 (298 aa).

Methionine 1 carries the N-acetylmethionine modification. The segment at 1 to 52 (MESQKEARILQEPVARPPGASRSQTPNAKERQEGGPVPAAAALGAEADDDSA) is disordered. At serine 132 the chain carries Phosphoserine. The DXTW signature appears at 178 to 181 (DGTW).

Belongs to the TDD superfamily. DTWD2 family.

It localises to the nucleus. Its subcellular location is the cytoplasm. The enzyme catalyses a uridine in tRNA + S-adenosyl-L-methionine = a 3-[(3S)-3-amino-3-carboxypropyl]uridine in tRNA + S-methyl-5'-thioadenosine + H(+). In terms of biological role, catalyzes the formation of 3-(3-amino-3-carboxypropyl)uridine (acp3U) at position 20a in the D-loop of several cytoplasmic tRNAs (acp3U(20a)). Also has a weak activity to form acp3U at position 20 in the D-loop of tRNAs (acp3U(20)). Involved in glycoRNA biosynthesis by mediating formation of acp3U, which acts as an attachment site for N-glycans on tRNAs. GlycoRNAs consist of RNAs modified with secretory N-glycans that are presented on the cell surface. The chain is tRNA-uridine aminocarboxypropyltransferase 2 from Macaca fascicularis (Crab-eating macaque).